The chain runs to 85 residues: Large ribosomal subunit protein bL27 (85 aa).

It belongs to the bacterial ribosomal protein bL27 family.

The chain is Large ribosomal subunit protein bL27 from Cellvibrio japonicus (strain Ueda107) (Pseudomonas fluorescens subsp. cellulosa).